Reading from the N-terminus, the 71-residue chain is Cell division protein ZapB (71 aa).

Residues 5 to 67 adopt a coiled-coil conformation; sequence LEVLEQLESK…RALLGKMEQM (63 aa).

It belongs to the ZapB family. As to quaternary structure, homodimer. The ends of the coiled-coil dimer bind to each other, forming polymers. Interacts with FtsZ.

Its subcellular location is the cytoplasm. In terms of biological role, non-essential, abundant cell division factor that is required for proper Z-ring formation. It is recruited early to the divisome by direct interaction with FtsZ, stimulating Z-ring assembly and thereby promoting cell division earlier in the cell cycle. Its recruitment to the Z-ring requires functional FtsA or ZipA. The chain is Cell division protein ZapB from Aeromonas salmonicida (strain A449).